The primary structure comprises 734 residues: Paralemmin-3 (734 aa).

Positions 19–64 form a coiled coil; it reads SALYRQRLEVIAEKRRLQEEIGAARRELEEEKLRVERLKRKSLRER. Disordered regions lie at residues 62 to 100 and 114 to 217; these read RERW…RNLE and QSAS…LGVS. The segment covering 73–82 has biased composition (basic and acidic residues); the sequence is GPERPEEPAS. The stretch at 90–116 forms a coiled coil; it reads GQAQARIRNLEDSLFSLQSQLQLLQSA. A phosphoserine mark is found at Ser-139, Ser-158, Ser-167, Ser-170, and Ser-172. Polar residues predominate over residues 186-198; that stretch reads RPSTEAIGTSSEA. Ser-270 bears the Phosphoserine mark. Positions 297-308 are enriched in basic and acidic residues; that stretch reads DVTGESGRDAEA. Disordered stretches follow at residues 297-347, 374-400, and 413-709; these read DVTG…PGVE, PQGA…SWEV, and EKGR…YAPA. Thr-311 is modified (phosphothreonine). A compositionally biased stretch (basic and acidic residues) spans 315–336; sequence RLQEQFEAETCRKEEGASRDSL. Phosphoserine occurs at positions 332 and 335. 8 stretches are compositionally biased toward basic and acidic residues: residues 413–427, 435–452, 462–484, 494–531, 540–561, 571–582, 589–607, and 630–647; these read EKGR…REDG, TQGR…KDSE, DEEK…KGGE, LVTE…ESKT, IGDK…EKTG, EGSKKLLDREAD, EVDK…EQGK, and DEPR…KQEG. The residue at position 451 (Ser-451) is a Phosphoserine. A Phosphoserine modification is found at Ser-601. Ser-721 carries the post-translational modification Phosphoserine. Residues Cys-728 and Cys-730 are each lipidated (S-palmitoyl cysteine). Cys-731 is subject to Cysteine methyl ester. Residue Cys-731 is the site of S-farnesyl cysteine attachment. The propeptide at 732-734 is removed in mature form; sequence VVM.

This sequence belongs to the paralemmin family. Interacts with SIGIRR. Palmitoylated on Cys-728 and Cys-730 and prenylated on Cys-731; which is required for membrane association.

The protein resides in the cytoplasm. Its subcellular location is the cell membrane. Its function is as follows. ATP-binding protein, which may act as a adapter in the Toll-like receptor (TLR) signaling. In Mus musculus (Mouse), this protein is Paralemmin-3 (Palm3).